Reading from the N-terminus, the 314-residue chain is MSNSASSFTGVSSGYTAGTPVPADSPIRDNIADAVRRVRETTPLAQSFTNFVTINLVANAQLAAGGTAAMSFLPDDVIETAKIAGANYINVGTLLPFYKDALPEIAQRLNYLDKPWVLDPVAAGIGRTRTAILQAFKAAPPTMIRANASEVIALANMWGLNTETVGDASEHRPAGVESVDDVESATGAAVALAQYLTEQHAKHSSHDASTRCAVAVSGIADLVTDGETVYRLPGGSAMMTKIIGAGCSLGGVAATYLAVSDPLTAALSASLLYNRAGEVADTTSHGPGSFQVAFLDALWNVTAEQVAESEILVQ.

Met-70 contributes to the substrate binding site. Residues Arg-145 and Ser-217 each contribute to the ATP site. Gly-244 serves as a coordination point for substrate.

This sequence belongs to the Thz kinase family. Mg(2+) serves as cofactor.

The enzyme catalyses 5-(2-hydroxyethyl)-4-methylthiazole + ATP = 4-methyl-5-(2-phosphooxyethyl)-thiazole + ADP + H(+). It participates in cofactor biosynthesis; thiamine diphosphate biosynthesis; 4-methyl-5-(2-phosphoethyl)-thiazole from 5-(2-hydroxyethyl)-4-methylthiazole: step 1/1. Catalyzes the phosphorylation of the hydroxyl group of 4-methyl-5-beta-hydroxyethylthiazole (THZ). The chain is Hydroxyethylthiazole kinase from Bifidobacterium longum (strain NCC 2705).